Consider the following 158-residue polypeptide: UPF0311 protein CA_C3321 (158 aa).

This sequence belongs to the UPF0311 family.

The protein is UPF0311 protein CA_C3321 of Clostridium acetobutylicum (strain ATCC 824 / DSM 792 / JCM 1419 / IAM 19013 / LMG 5710 / NBRC 13948 / NRRL B-527 / VKM B-1787 / 2291 / W).